A 192-amino-acid chain; its full sequence is Visinin (192 aa).

Gly2 carries the N-myristoyl glycine lipid modification. 4 consecutive EF-hand domains span residues 24 to 59, 61 to 96, 97 to 132, and 146 to 181; these read TEEE…FFPN, EPQG…TSSG, KTHL…IFKM, and NSPQ…KNDA. Residues Asp74, Asn76, Asp78, Thr80, Glu85, Asp110, Asp112, Asn114, Glu116, Glu121, Asn164, Lys166, and Glu171 each contribute to the Ca(2+) site.

It belongs to the recoverin family. As to expression, retinal cell specific protein.

Functionally, seems to be implicated in the pathway from retinal rod guanylate cyclase to rhodopsin. May be involved in the blocking of the phosphorylation of rhodopsin. The sequence is that of Visinin from Gallus gallus (Chicken).